We begin with the raw amino-acid sequence, 142 residues long: Large ribosomal subunit protein uL11 (142 aa).

The protein belongs to the universal ribosomal protein uL11 family. In terms of assembly, part of the ribosomal stalk of the 50S ribosomal subunit. Interacts with L10 and the large rRNA to form the base of the stalk. L10 forms an elongated spine to which L12 dimers bind in a sequential fashion forming a multimeric L10(L12)X complex. Post-translationally, one or more lysine residues are methylated.

Forms part of the ribosomal stalk which helps the ribosome interact with GTP-bound translation factors. In Lachnoclostridium phytofermentans (strain ATCC 700394 / DSM 18823 / ISDg) (Clostridium phytofermentans), this protein is Large ribosomal subunit protein uL11.